The following is a 126-amino-acid chain: Large ribosomal subunit protein bL12 (126 aa).

This sequence belongs to the bacterial ribosomal protein bL12 family. Homodimer. Part of the ribosomal stalk of the 50S ribosomal subunit. Forms a multimeric L10(L12)X complex, where L10 forms an elongated spine to which 2 to 4 L12 dimers bind in a sequential fashion. Binds GTP-bound translation factors.

In terms of biological role, forms part of the ribosomal stalk which helps the ribosome interact with GTP-bound translation factors. Is thus essential for accurate translation. This Coxiella burnetii (strain CbuK_Q154) (Coxiella burnetii (strain Q154)) protein is Large ribosomal subunit protein bL12.